The sequence spans 252 residues: MNTQATPSPQFYLTAPATCPYLPNQMERKVFTHLVGPRAPEMNDLLTQGGFRRSQNIAYRPACETCRACVSVRILTEQFQPTKSMRRVLAANSDVVATVHAAEPSTEQFALFRRYLDHRHQSGGMSDMSALDYAIMVEDTHVNTRIIEYRVREPGSGIDSSKRGELLAVALSDVMSDGLSMVYSFFNPELEKRSLGTFMIIDHITRTRALGLPHVYLGYWVDGSEKMGYKTRYHPQEHLTPRGWEIYSPKEE.

The protein belongs to the R-transferase family. Bpt subfamily.

Its subcellular location is the cytoplasm. The catalysed reaction is N-terminal L-glutamyl-[protein] + L-leucyl-tRNA(Leu) = N-terminal L-leucyl-L-glutamyl-[protein] + tRNA(Leu) + H(+). It carries out the reaction N-terminal L-aspartyl-[protein] + L-leucyl-tRNA(Leu) = N-terminal L-leucyl-L-aspartyl-[protein] + tRNA(Leu) + H(+). In terms of biological role, functions in the N-end rule pathway of protein degradation where it conjugates Leu from its aminoacyl-tRNA to the N-termini of proteins containing an N-terminal aspartate or glutamate. The sequence is that of Aspartate/glutamate leucyltransferase from Agrobacterium fabrum (strain C58 / ATCC 33970) (Agrobacterium tumefaciens (strain C58)).